The sequence spans 364 residues: Valine dehydrogenase (364 aa).

Lysine 91 is an active-site residue. 191–197 is an NAD(+) binding site; it reads GVGKVGH.

Belongs to the Glu/Leu/Phe/Val dehydrogenases family. Homodimer.

It is found in the cytoplasm. The catalysed reaction is L-valine + NAD(+) + H2O = 3-methyl-2-oxobutanoate + NH4(+) + NADH + H(+). Its pathway is amino-acid degradation; L-valine degradation. Its activity is regulated as follows. Inhibited by pyridoxal 5'-phosphate (PLP). In terms of biological role, oxidative deamination of branched-chain amino acids. Oxidizes L-valine and L-alpha-aminobutyric acid efficiently, and L-alanine and L-isoleucine less efficiently. D-valine and L-glutamate were not substrates for the enzyme. The catabolism of valine is the major source of fatty acid precursors for macrolide biosynthesis and a vital source of antibiotic precursors. This is Valine dehydrogenase from Streptomyces albus (strain ATCC 21838 / DSM 41398 / FERM P-419 / JCM 4703 / NBRC 107858).